Consider the following 337-residue polypeptide: DNA-directed RNA polymerase subunit alpha (337 aa).

The tract at residues 1 to 232 (MVREEVRVCT…IDLFIPFLHA (232 aa)) is alpha N-terminal domain (alpha-NTD). The interval 266-337 (EISFQCIFID…FAIDLPKNKF (72 aa)) is alpha C-terminal domain (alpha-CTD).

It belongs to the RNA polymerase alpha chain family. As to quaternary structure, in plastids the minimal PEP RNA polymerase catalytic core is composed of four subunits: alpha, beta, beta', and beta''. When a (nuclear-encoded) sigma factor is associated with the core the holoenzyme is formed, which can initiate transcription.

It localises to the plastid. Its subcellular location is the chloroplast. It catalyses the reaction RNA(n) + a ribonucleoside 5'-triphosphate = RNA(n+1) + diphosphate. DNA-dependent RNA polymerase catalyzes the transcription of DNA into RNA using the four ribonucleoside triphosphates as substrates. This chain is DNA-directed RNA polymerase subunit alpha, found in Buxus microphylla (Littleleaf boxwood).